The sequence spans 222 residues: Ribonuclease HII (222 aa).

One can recognise an RNase H type-2 domain in the interval 17–206 (DLVAGVDEVG…VRAAHEARAS (190 aa)). 3 residues coordinate a divalent metal cation: Asp23, Glu24, and Asp115.

It belongs to the RNase HII family. Requires Mn(2+) as cofactor. It depends on Mg(2+) as a cofactor.

It is found in the cytoplasm. It carries out the reaction Endonucleolytic cleavage to 5'-phosphomonoester.. In terms of biological role, endonuclease that specifically degrades the RNA of RNA-DNA hybrids. This is Ribonuclease HII from Pseudomonas savastanoi pv. phaseolicola (strain 1448A / Race 6) (Pseudomonas syringae pv. phaseolicola (strain 1448A / Race 6)).